The chain runs to 284 residues: Lipoyl synthase (284 aa).

Residues Cys38, Cys43, Cys49, Cys64, Cys68, Cys71, and Ser277 each contribute to the [4Fe-4S] cluster site. The Radical SAM core domain maps to 50-266; the sequence is WSRGTATFLL…RDEALGMGFS (217 aa).

Belongs to the radical SAM superfamily. Lipoyl synthase family. Requires [4Fe-4S] cluster as cofactor.

It localises to the cytoplasm. It catalyses the reaction [[Fe-S] cluster scaffold protein carrying a second [4Fe-4S](2+) cluster] + N(6)-octanoyl-L-lysyl-[protein] + 2 oxidized [2Fe-2S]-[ferredoxin] + 2 S-adenosyl-L-methionine + 4 H(+) = [[Fe-S] cluster scaffold protein] + N(6)-[(R)-dihydrolipoyl]-L-lysyl-[protein] + 4 Fe(3+) + 2 hydrogen sulfide + 2 5'-deoxyadenosine + 2 L-methionine + 2 reduced [2Fe-2S]-[ferredoxin]. It functions in the pathway protein modification; protein lipoylation via endogenous pathway; protein N(6)-(lipoyl)lysine from octanoyl-[acyl-carrier-protein]: step 2/2. Functionally, catalyzes the radical-mediated insertion of two sulfur atoms into the C-6 and C-8 positions of the octanoyl moiety bound to the lipoyl domains of lipoate-dependent enzymes, thereby converting the octanoylated domains into lipoylated derivatives. This Chlorobium phaeovibrioides (strain DSM 265 / 1930) (Prosthecochloris vibrioformis (strain DSM 265)) protein is Lipoyl synthase.